We begin with the raw amino-acid sequence, 330 residues long: Aspartate--ammonia ligase (330 aa).

This sequence belongs to the class-II aminoacyl-tRNA synthetase family. AsnA subfamily.

Its subcellular location is the cytoplasm. The enzyme catalyses L-aspartate + NH4(+) + ATP = L-asparagine + AMP + diphosphate + H(+). Its pathway is amino-acid biosynthesis; L-asparagine biosynthesis; L-asparagine from L-aspartate (ammonia route): step 1/1. The polypeptide is Aspartate--ammonia ligase (Mannheimia succiniciproducens (strain KCTC 0769BP / MBEL55E)).